Here is a 416-residue protein sequence, read N- to C-terminus: Formyl-CoA:oxalate CoA-transferase (416 aa).

Residues 17 to 18, Arg38, 72 to 75, 96 to 98, His104, and 137 to 140 each bind CoA; these read QS, LNTK, NFH, and KAYE. Asp169 serves as the catalytic Nucleophile. A substrate-binding site is contributed by 248–250; it reads GGQ. Position 273–275 (273–275) interacts with CoA; that stretch reads QEQ.

The protein belongs to the CoA-transferase III family. Frc subfamily. In terms of assembly, homodimer.

The enzyme catalyses formyl-CoA + oxalate = oxalyl-CoA + formate. It functions in the pathway metabolic intermediate degradation; oxalate degradation; CO(2) and formate from oxalate: step 1/2. Functionally, involved in the catabolism of oxalate and in the adapatation to low pH via the induction of the oxalate-dependent acid tolerance response (ATR). Catalyzes the transfer of the CoA moiety from formyl-CoA to oxalate. The chain is Formyl-CoA:oxalate CoA-transferase from Escherichia coli O17:K52:H18 (strain UMN026 / ExPEC).